Reading from the N-terminus, the 351-residue chain is MTILSDVKALGQQIWLDNLSRSLVQSGELAQMLKQGVCGVTSNPAIFQKAFAGDALYADEVAALKQQDLTPKQRYETMAVADVQAACDVCLAEHESTGGKTGFVSLEVSPELSKDAQGTVEEARRLYAAIGCKNAMIKVPATDAGIDALETLVSDGISVNLTLLFSRVQTLKAYAAYARGIAKRLAAGQSVAHIHVVASFFISRVDGALDTTLPDHLKGKIAIALAKAAYQDWAQYFGSPEFAALETQGANRVQLLWASTGVKNPAYPDTLYVDSLIGAHTVNTVPDATLKAFIDHGTAKATLTEGADEAQAQLAETAALGIDVETLAARLQEDGLKQFEEAFEKLLAPLV.

Lys138 serves as the catalytic Schiff-base intermediate with substrate.

This sequence belongs to the transaldolase family. Type 2 subfamily.

Its subcellular location is the cytoplasm. It catalyses the reaction D-sedoheptulose 7-phosphate + D-glyceraldehyde 3-phosphate = D-erythrose 4-phosphate + beta-D-fructose 6-phosphate. Its pathway is carbohydrate degradation; pentose phosphate pathway; D-glyceraldehyde 3-phosphate and beta-D-fructose 6-phosphate from D-ribose 5-phosphate and D-xylulose 5-phosphate (non-oxidative stage): step 2/3. Functionally, transaldolase is important for the balance of metabolites in the pentose-phosphate pathway. The chain is Transaldolase from Neisseria meningitidis serogroup C / serotype 2a (strain ATCC 700532 / DSM 15464 / FAM18).